The primary structure comprises 283 residues: MREEEKKTSQVKKLQQFFRKRWVFPAIYLVSAAVILTAVLWYQSVSNDEVKDQLADNGGNSAYDNNDDAVEVGKSMENVAMPVVDSENVSVVKKFYETDAAKEEKEAALVTYNNTYSLSKGIDLAEKDGKDFDVSASLSGTVVKAEKDPVLGYVVEVEHADGLSTVYQSLSEVSVEQGDKVKQNQVIGKSGKNLYSEDSGNHVHFEIRKDGVAMNPLNFMDKPVSSIEKAATQETEESIQQSSEKKDGSTEKGTEEKSGEKKDDSTDKSGSKESSTTEDTEQS.

A helical transmembrane segment spans residues 22 to 42 (WVFPAIYLVSAAVILTAVLWY). Residues 228–283 (EKAATQETEESIQQSSEKKDGSTEKGTEEKSGEKKDDSTDKSGSKESSTTEDTEQS) form a disordered region. Residues 243–271 (SEKKDGSTEKGTEEKSGEKKDDSTDKSGS) show a composition bias toward basic and acidic residues.

As to quaternary structure, interacts with SpoIIIAH and SpoIIE.

It is found in the forespore membrane. Involved in forespore engulfment and required for anchoring membrane proteins on the forespore side of the septal membrane. Forms a channel with SpoIIIAH that is open on the forespore end and closed (or gated) on the mother cell end. This allows sigma-E-directed gene expression in the mother-cell compartment of the sporangium to trigger the activation of sigma-G forespore-specific gene expression by a pathway of intercellular signaling. This chain is Stage II sporulation protein Q (spoIIQ), found in Bacillus subtilis (strain 168).